We begin with the raw amino-acid sequence, 338 residues long: D-erythrose-4-phosphate dehydrogenase (338 aa).

Residue 12–13 (RI) participates in NAD(+) binding. Residues 154–156 (SCT), Arg200, 213–214 (TK), and Arg236 each bind substrate. The Nucleophile role is filled by Cys155. Asn318 is an NAD(+) binding site.

Belongs to the glyceraldehyde-3-phosphate dehydrogenase family. Epd subfamily. In terms of assembly, homotetramer.

It localises to the cytoplasm. It catalyses the reaction D-erythrose 4-phosphate + NAD(+) + H2O = 4-phospho-D-erythronate + NADH + 2 H(+). Its pathway is cofactor biosynthesis; pyridoxine 5'-phosphate biosynthesis; pyridoxine 5'-phosphate from D-erythrose 4-phosphate: step 1/5. Its function is as follows. Catalyzes the NAD-dependent conversion of D-erythrose 4-phosphate to 4-phosphoerythronate. The sequence is that of D-erythrose-4-phosphate dehydrogenase from Yersinia enterocolitica serotype O:8 / biotype 1B (strain NCTC 13174 / 8081).